The following is a 283-amino-acid chain: Urease accessory protein UreD 1 (283 aa).

It belongs to the UreD family. As to quaternary structure, ureD, UreF and UreG form a complex that acts as a GTP-hydrolysis-dependent molecular chaperone, activating the urease apoprotein by helping to assemble the nickel containing metallocenter of UreC. The UreE protein probably delivers the nickel.

It is found in the cytoplasm. Its function is as follows. Required for maturation of urease via the functional incorporation of the urease nickel metallocenter. In Brucella anthropi (strain ATCC 49188 / DSM 6882 / CCUG 24695 / JCM 21032 / LMG 3331 / NBRC 15819 / NCTC 12168 / Alc 37) (Ochrobactrum anthropi), this protein is Urease accessory protein UreD 1.